We begin with the raw amino-acid sequence, 318 residues long: Na(+)-translocating NADH-quinone reductase subunit C (318 aa).

Residues 13-33 (WYIILFIFVLSLVAGTLLSSV) form a helical membrane-spanning segment. FMN phosphoryl threonine is present on threonine 281.

This sequence belongs to the NqrC family. In terms of assembly, composed of six subunits; NqrA, NqrB, NqrC, NqrD, NqrE and NqrF. The cofactor is FMN.

It is found in the cell inner membrane. The catalysed reaction is a ubiquinone + n Na(+)(in) + NADH + H(+) = a ubiquinol + n Na(+)(out) + NAD(+). Functionally, NQR complex catalyzes the reduction of ubiquinone-1 to ubiquinol by two successive reactions, coupled with the transport of Na(+) ions from the cytoplasm to the periplasm. NqrA to NqrE are probably involved in the second step, the conversion of ubisemiquinone to ubiquinol. The polypeptide is Na(+)-translocating NADH-quinone reductase subunit C (Chlamydia muridarum (strain MoPn / Nigg)).